We begin with the raw amino-acid sequence, 360 residues long: Probable arginine kinase ZC434.8 (360 aa).

The 83-residue stretch at serine 10–asparagine 92 folds into the Phosphagen kinase N-terminal domain. Glycine 65–tyrosine 69 is a substrate binding site. The region spanning phenylalanine 122 to alanine 359 is the Phosphagen kinase C-terminal domain. ATP contacts are provided by residues serine 125–arginine 129 and histidine 189. Glutamate 229 provides a ligand contact to substrate. Position 233 (arginine 233) interacts with ATP. Residue cysteine 275 participates in substrate binding. ATP-binding positions include arginine 284–histidine 288, arginine 312–glutamate 317, and aspartate 327. A substrate-binding site is contributed by glutamate 317.

Belongs to the ATP:guanido phosphotransferase family.

The catalysed reaction is L-arginine + ATP = N(omega)-phospho-L-arginine + ADP + H(+). The protein is Probable arginine kinase ZC434.8 of Caenorhabditis elegans.